The sequence spans 478 residues: Hemolysin secretion protein D, plasmid (478 aa).

Residues 1–59 lie on the Cytoplasmic side of the membrane; it reads MKTWLMGFSEFLLRYKLVWSETWKIRKQLDTPVREKDENEFLPAHLELIETPVSRRPRL. The chain crosses the membrane as a helical; Signal-anchor for type II membrane protein span at residues 60 to 80; sequence VAYFIMGFLVIAFILSVLGQV. At 81 to 478 the chain is on the periplasmic side; sequence EIVATANGKL…ESVTESLRER (398 aa).

It belongs to the membrane fusion protein (MFP) (TC 8.A.1) family.

The protein localises to the cell inner membrane. Involved in the transport of hemolysin A. The sequence is that of Hemolysin secretion protein D, plasmid (hlyD) from Escherichia coli.